The following is a 109-amino-acid chain: Small ribosomal subunit protein eS25 (109 aa).

Positions 1-36 (MGGASKKPISTVEKRMKKMAEEQQKKQQKRATTKTG) are disordered. Positions 12-25 (VEKRMKKMAEEQQK) are enriched in basic and acidic residues.

It belongs to the eukaryotic ribosomal protein eS25 family.

This is Small ribosomal subunit protein eS25 (rps25e) from Sulfurisphaera tokodaii (strain DSM 16993 / JCM 10545 / NBRC 100140 / 7) (Sulfolobus tokodaii).